A 245-amino-acid chain; its full sequence is Geranylgeranylglyceryl phosphate synthase (245 aa).

Positions 24 and 54 each coordinate Mg(2+). Residues 172 to 178 (YLEAGSG), 203 to 204 (GG), and 225 to 226 (GT) contribute to the sn-glycerol 1-phosphate site.

This sequence belongs to the GGGP/HepGP synthase family. Group II subfamily. It depends on Mg(2+) as a cofactor.

The protein localises to the cytoplasm. It catalyses the reaction sn-glycerol 1-phosphate + (2E,6E,10E)-geranylgeranyl diphosphate = sn-3-O-(geranylgeranyl)glycerol 1-phosphate + diphosphate. It functions in the pathway membrane lipid metabolism; glycerophospholipid metabolism. In terms of biological role, prenyltransferase that catalyzes the transfer of the geranylgeranyl moiety of geranylgeranyl diphosphate (GGPP) to the C3 hydroxyl of sn-glycerol-1-phosphate (G1P). This reaction is the first ether-bond-formation step in the biosynthesis of archaeal membrane lipids. This Staphylothermus marinus (strain ATCC 43588 / DSM 3639 / JCM 9404 / F1) protein is Geranylgeranylglyceryl phosphate synthase.